A 174-amino-acid chain; its full sequence is Ribulose bisphosphate carboxylase small subunit, chloroplastic (174 aa).

The N-terminal 45 residues, Met-1–Arg-45, are a transit peptide targeting the chloroplast.

It belongs to the RuBisCO small chain family. As to quaternary structure, heterohexadecamer of 8 large and 8 small subunits.

It localises to the plastid. The protein localises to the chloroplast. Functionally, ruBisCO catalyzes two reactions: the carboxylation of D-ribulose 1,5-bisphosphate, the primary event in carbon dioxide fixation, as well as the oxidative fragmentation of the pentose substrate. Both reactions occur simultaneously and in competition at the same active site. Although the small subunit is not catalytic it is essential for maximal activity. The chain is Ribulose bisphosphate carboxylase small subunit, chloroplastic from Hordeum vulgare (Barley).